The following is a 578-amino-acid chain: Tetratricopeptide repeat protein 39A (578 aa).

TPR repeat units follow at residues 280–313, 470–503, and 511–544; these read AIFLFFAGRIEAIKGNIDAAVRRFEECCEAQQHW, CLVKLLKGLCLKYLGRIQEAEENFRSISANEKKI, and PNALLELALLFMEQGRNEEAIKLLESAKQNYKNY.

This sequence belongs to the TTC39 family.

The chain is Tetratricopeptide repeat protein 39A (Ttc39a) from Mus musculus (Mouse).